The primary structure comprises 525 residues: Cytochrome P450 4V2 (525 aa).

The chain crosses the membrane as a helical span at residues leucine 13–isoleucine 33. Heme contacts are provided by glutamate 329 and cysteine 467.

It belongs to the cytochrome P450 family. Requires heme as cofactor.

It localises to the endoplasmic reticulum membrane. It carries out the reaction dodecanoate + reduced [NADPH--hemoprotein reductase] + O2 = 12-hydroxydodecanoate + oxidized [NADPH--hemoprotein reductase] + H2O + H(+). The catalysed reaction is tetradecanoate + reduced [NADPH--hemoprotein reductase] + O2 = 14-hydroxytetradecanoate + oxidized [NADPH--hemoprotein reductase] + H2O + H(+). The enzyme catalyses hexadecanoate + reduced [NADPH--hemoprotein reductase] + O2 = 16-hydroxyhexadecanoate + oxidized [NADPH--hemoprotein reductase] + H2O + H(+). It catalyses the reaction (5Z,8Z,11Z,14Z,17Z)-eicosapentaenoate + reduced [NADPH--hemoprotein reductase] + O2 = 20-hydroxy-(5Z,8Z,11Z,14Z,17Z)-eicosapentaenoate + oxidized [NADPH--hemoprotein reductase] + H2O + H(+). It carries out the reaction (4Z,7Z,10Z,13Z,16Z,19Z)-docosahexaenoate + reduced [NADPH--hemoprotein reductase] + O2 = 22-hydroxy-(4Z,7Z,10Z,13Z,16Z,19Z)-docosahexaenoate + oxidized [NADPH--hemoprotein reductase] + H2O + H(+). It participates in lipid metabolism; fatty acid metabolism. Inhibited by N-hydroxy-N'-(4-n-butyl-2-methylphenyl formamidine)(HET0016) with an IC(50) of 38 nM. A cytochrome P450 monooxygenase involved in fatty acid metabolism in the eye. Catalyzes the omega-hydroxylation of polyunsaturated fatty acids (PUFAs) docosahexaenoate (DHA) and its precursor eicosapentaenoate (EPA), and may contribute to the homeostasis of these retinal PUFAs. Omega hydroxylates saturated fatty acids such as laurate, myristate and palmitate, the catalytic efficiency decreasing in the following order: myristate &gt; laurate &gt; palmitate (C14&gt;C12&gt;C16). Mechanistically, uses molecular oxygen inserting one oxygen atom into a substrate, and reducing the second into a water molecule, with two electrons provided by NADPH via cytochrome P450 reductase (CPR; NADPH-ferrihemoprotein reductase). The polypeptide is Cytochrome P450 4V2 (Cyp4v2) (Rattus norvegicus (Rat)).